The sequence spans 513 residues: MAASRNGFEAVEAEGSAGCRGSSGMEVVLPLDPAVPAPLCPHGPTLLFVKVTQGKEETRRFYACSACRDRKDCNFFQWEDEKLSGARLAAREAHNRRCQPPLSRTQCVERYLKFIELPLTQRKFCQTCQQLLLPDDWGQHSEHQVLGNVSITQLRRPSQLLYPLENKKTNAQYLFADRSCQFLVDLLSALGFRRVLCVGTPRLHELIKLTASGDKKSNIKSLLLDIDFRYSQFYMEDSFCHYNMFNHHFFDGKTALEVCRAFLQEDKGEGIIMVTDPPFGGLVEPLAITFKKLIAMWKEGQSQDDSHKELPIFWIFPYFFESRICQFFPSFQMLDYQVDYDNHALYKHGKTGRKQSPVRIFTNIPPNKIILPTEEGYRFCSPCQRYVSLENQHCELCNSCTSKDGRKWNHCFLCKKCVKPSWIHCSICNHCAVPDHSCEGPKHGCFICGELDHKRSTCPNIATSKRANKAVRKQKQRKSNKMKMETTKGQSMNHTSATRRKKRRERAHQYLGS.

Zn(2+) is bound by residues cysteine 40, histidine 42, cysteine 64, cysteine 73, cysteine 125, cysteine 128, histidine 140, and histidine 143. The GRF-type zinc-finger motif lies at 40–82 (CPHGPTLLFVKVTQGKEETRRFYACSACRDRKDCNFFQWEDEK). S-adenosyl-L-methionine contacts are provided by residues 172–175 (QYLF), arginine 202, aspartate 225, 243–244 (NM), and aspartate 276. A regulatory loop region spans residues 337-357 (QVDYDNHALYKHGKTGRKQSP). Cysteine 380, cysteine 383, histidine 393, cysteine 394, cysteine 397, cysteine 400, histidine 410, cysteine 411, cysteine 414, cysteine 417, histidine 424, cysteine 425, cysteine 428, cysteine 431, histidine 436, and cysteine 438 together coordinate Zn(2+). The DHHC domain occupies 395-447 (ELCNSCTSKDGRKWNHCFLCKKCVKPSWIHCSICNHCAVPDHSCEGPKHGCFI). The CCHC-type zinc-finger motif lies at 443-460 (HGCFICGELDHKRSTCPN). A compositionally biased stretch (basic residues) spans 466-481 (RANKAVRKQKQRKSNK). A disordered region spans residues 466–513 (RANKAVRKQKQRKSNKMKMETTKGQSMNHTSATRRKKRRERAHQYLGS). Positions 487 to 496 (TKGQSMNHTS) are enriched in polar residues. Residues 497 to 506 (ATRRKKRRER) are compositionally biased toward basic residues.

The protein belongs to the ZCCHC4 family. Interacts with components of the ASC-1 complex TRIP4, ASCC1, ASCC2 and ASCC3. Interact with AHCYL1 and AHCYL2. Interact with YTHDC2.

Its subcellular location is the nucleus. The protein localises to the nucleolus. It is found in the cytoplasm. The enzyme catalyses adenosine(4220) in 28S rRNA + S-adenosyl-L-methionine = N(6)-methyladenosine(4220) in 28S rRNA + S-adenosyl-L-homocysteine + H(+). Its function is as follows. rRNA N6-methyltransferase that specifically methylates the adenine in position 4220 of 28S rRNA. N6-methylation of adenine(4220) in 28S rRNA is required for translation. This chain is rRNA N(6)-adenosine-methyltransferase ZCCHC4, found in Homo sapiens (Human).